A 548-amino-acid polypeptide reads, in one-letter code: Chaperonin GroEL (548 aa).

Residues 30-33, K51, 87-91, G415, 479-481, and D495 contribute to the ATP site; these read TLGP, DGTTT, and NAA. The segment at 526 to 548 is disordered; it reads REDKSSDVASSPAGGMGGMGGMM. The span at 539 to 548 shows a compositional bias: gly residues; it reads GGMGGMGGMM.

This sequence belongs to the chaperonin (HSP60) family. Forms a cylinder of 14 subunits composed of two heptameric rings stacked back-to-back. Interacts with the co-chaperonin GroES.

Its subcellular location is the cytoplasm. The catalysed reaction is ATP + H2O + a folded polypeptide = ADP + phosphate + an unfolded polypeptide.. In terms of biological role, together with its co-chaperonin GroES, plays an essential role in assisting protein folding. The GroEL-GroES system forms a nano-cage that allows encapsulation of the non-native substrate proteins and provides a physical environment optimized to promote and accelerate protein folding. This Buchnera aphidicola subsp. Schizaphis graminum (strain Sg) protein is Chaperonin GroEL.